The following is a 250-amino-acid chain: Acetoacetate decarboxylase 1 (250 aa).

The active-site Schiff-base intermediate with acetoacetate is lysine 120.

Belongs to the ADC family.

It catalyses the reaction acetoacetate + H(+) = acetone + CO2. Its function is as follows. Catalyzes the conversion of acetoacetate to acetone and carbon dioxide. The protein is Acetoacetate decarboxylase 1 of Bradyrhizobium diazoefficiens (strain JCM 10833 / BCRC 13528 / IAM 13628 / NBRC 14792 / USDA 110).